The sequence spans 75 residues: Acyl carrier protein (75 aa).

Residues 1 to 75 enclose the Carrier domain; it reads MSVFDKVKSI…DAVNYIKENQ (75 aa). Ser35 carries the post-translational modification O-(pantetheine 4'-phosphoryl)serine.

Belongs to the acyl carrier protein (ACP) family. 4'-phosphopantetheine is transferred from CoA to a specific serine of apo-ACP by AcpS. This modification is essential for activity because fatty acids are bound in thioester linkage to the sulfhydryl of the prosthetic group.

The protein resides in the cytoplasm. It participates in lipid metabolism; fatty acid biosynthesis. Its function is as follows. Carrier of the growing fatty acid chain in fatty acid biosynthesis. This Desulfitobacterium hafniense (strain Y51) protein is Acyl carrier protein.